The chain runs to 115 residues: Large ribosomal subunit protein bL35m (115 aa).

Belongs to the bacterial ribosomal protein bL35 family.

It localises to the mitochondrion. The polypeptide is Large ribosomal subunit protein bL35m (Saccharomyces cerevisiae (strain YJM789) (Baker's yeast)).